The chain runs to 704 residues: Plasma membrane ATPase 2 (704 aa).

Residues 1 to 16 (CSIAVGMIIEIIVMYP) traverse the membrane as a helical segment. At 17-26 (IQHRKYRPGI) the chain is on the extracellular side. A helical transmembrane segment spans residues 27–48 (DNLLVLLIGGIPIAMPTVLSVT). Topologically, residues 49-395 (MAIGSHRLAQ…TSRAIFQRMK (347 aa)) are cytoplasmic. The active-site 4-aspartylphosphate intermediate is the D81. Residues D340 and D344 each contribute to the Mg(2+) site. The helical transmembrane segment at 396–417 (NYTIYAVSITIRIVLGFMLLAL) threads the bilayer. Topologically, residues 418–422 (IWKFD) are extracellular. The helical transmembrane segment at 423–445 (FPPFMVLIIAILNDGTIMTISKD) threads the bilayer. Residues 446-461 (RVKPSPLPDSWKLAEI) are Cytoplasmic-facing. Residues 462-482 (FTTGVVLGGYLAMMTVIFFWA) traverse the membrane as a helical segment. Topologically, residues 483–507 (AYETQFFPRVFGVSTLQRTATDDFR) are extracellular. A helical transmembrane segment spans residues 508-528 (KLASAIYLQVSTISQALIFVT). Residues 529 to 540 (RSRSWSFVERPG) lie on the Cytoplasmic side of the membrane. A helical transmembrane segment spans residues 541–561 (LLLVVALIVAQLVATLIAVYA). The Extracellular segment spans residues 562–570 (SWSFAAIEG). A helical transmembrane segment spans residues 571-591 (IGWGWAGVIWLYNLVFYFPLD). The Cytoplasmic portion of the chain corresponds to 592-704 (IIKFLIRYAL…IETIQQSYTV (113 aa)).

This sequence belongs to the cation transport ATPase (P-type) (TC 3.A.3) family. Type IIIA subfamily. Possibly exists as a homodimer or a homotrimer.

Its subcellular location is the cell membrane. The enzyme catalyses ATP + H2O + H(+)(in) = ADP + phosphate + 2 H(+)(out). Functionally, the plasma membrane ATPase of plants and fungi is a hydrogen ion pump. The proton gradient it generates drives the active transport of nutrients by H(+)-symport. The resulting external acidification and/or internal alkinization may mediate growth responses. This Solanum lycopersicum (Tomato) protein is Plasma membrane ATPase 2 (LHA2).